Here is a 615-residue protein sequence, read N- to C-terminus: Translation initiation factor IF-2 (615 aa).

Residues Lys-118–Glu-285 form the tr-type G domain. The segment at Gly-127–Thr-134 is G1. Position 127-134 (Gly-127–Thr-134) interacts with GTP. The segment at Gly-152–His-156 is G2. The G3 stretch occupies residues Asp-173–Gly-176. GTP contacts are provided by residues Asp-173–His-177 and Asn-227–Asp-230. Positions Asn-227–Asp-230 are G4. A G5 region spans residues Ser-263–Ile-265.

Belongs to the TRAFAC class translation factor GTPase superfamily. Classic translation factor GTPase family. IF-2 subfamily.

The protein resides in the cytoplasm. In terms of biological role, one of the essential components for the initiation of protein synthesis. Protects formylmethionyl-tRNA from spontaneous hydrolysis and promotes its binding to the 30S ribosomal subunits. Also involved in the hydrolysis of GTP during the formation of the 70S ribosomal complex. The chain is Translation initiation factor IF-2 from Mycoplasmoides gallisepticum (strain R(low / passage 15 / clone 2)) (Mycoplasma gallisepticum).